The chain runs to 266 residues: 26 kDa endochitinase 2 (266 aa).

The first 23 residues, 1–23 (MRSLAVVVAVVATVAMAIGTARG), serve as a signal peptide directing secretion. Disulfide bonds link C46–C108, C120–C128, and C227–C259. Catalysis depends on E90, which acts as the Proton donor.

It belongs to the glycosyl hydrolase 19 family. Chitinase class II subfamily.

The enzyme catalyses Random endo-hydrolysis of N-acetyl-beta-D-glucosaminide (1-&gt;4)-beta-linkages in chitin and chitodextrins.. Defense against chitin-containing fungal pathogens. This is 26 kDa endochitinase 2 from Hordeum vulgare (Barley).